Consider the following 508-residue polypeptide: MTRALLSVSDKTGLVPFAEKLVALGYELVSTGGTHRVLAAAGLDVIAIDDVTDFPEMLDGRVKTLHPRVHAGLLARRDLPEHMAKMAEFDITPIDMVVVNLYPFKSTIQKDGVTEAEAIENIDIGGPSMLRSAAKNFAGVLPIVDPADYDVVVDKLQSGSIDADYRKSLAAKVFQHTAAYDALIADYLTVAEFPNNLTLPYEKFDDMRYGENPHQKAAAYKTALPEDYSVLNANILHGKQLSYNNIRDADAALRIIAEFEETTVVTVKHMNPAGIGQGSTIETAWDKAFAADDVSIFGGIVALNREVDAATAEKMHAIFLEIIIAPSFTPEAFDILSAKKNLRLLTVPFTTTVPQKLEVTSVLGGVVVQERDLYTESKANFEVVSKVQPTEAQLRAMIFAQKVVKHVKSNAIIVARDGQTLGMGAGQPNRIDSVVYAIQKAAVKSGFDEAVLASDAFFPMDDSVQYAAENGIRAVVEPGGSIKDKDSIAKADELGIALVFSGTRHFKH.

One can recognise an MGS-like domain in the interval Met1–Val144.

Belongs to the PurH family.

It catalyses the reaction (6R)-10-formyltetrahydrofolate + 5-amino-1-(5-phospho-beta-D-ribosyl)imidazole-4-carboxamide = 5-formamido-1-(5-phospho-D-ribosyl)imidazole-4-carboxamide + (6S)-5,6,7,8-tetrahydrofolate. It carries out the reaction IMP + H2O = 5-formamido-1-(5-phospho-D-ribosyl)imidazole-4-carboxamide. It participates in purine metabolism; IMP biosynthesis via de novo pathway; 5-formamido-1-(5-phospho-D-ribosyl)imidazole-4-carboxamide from 5-amino-1-(5-phospho-D-ribosyl)imidazole-4-carboxamide (10-formyl THF route): step 1/1. It functions in the pathway purine metabolism; IMP biosynthesis via de novo pathway; IMP from 5-formamido-1-(5-phospho-D-ribosyl)imidazole-4-carboxamide: step 1/1. The chain is Bifunctional purine biosynthesis protein PurH from Leuconostoc citreum (strain KM20).